A 64-amino-acid chain; its full sequence is Protein sigN173 (64 aa).

The polypeptide is Protein sigN173 (Dictyostelium discoideum (Social amoeba)).